A 439-amino-acid polypeptide reads, in one-letter code: MNVKVEDISSIKKKLSFEISVEAVDTEFSNEYKKLSKTAKIPGFRKGKVPRSVLERQYAGHVEGQVFERLVNETFFKALVDEKINAVSAPEVVDNGPLKPGQAFTYEAEVEVRPDVEAKDYIGLDLKKENFAVEDQDVEDRLQDMLKSRAKVEVSEREVAQAGDIAVIDFEGFVDGEAFAGGKAEGHELELGSNSFIPGFEDQVVGMECGQDKDIEVAFPEDYGNEELAGKPAVFKVRLNQIKERVLPALDEEFAKEAGLESVEDLKIKIRESIEGQERDRIEKDFRERMTDALIEANEFEVPEGMIDSQIDYMLKNLQNRMQAQGMRLEDMGINAESFRQIYREVAAKQVKASLILEAIALQENLKVEEDEIKDKLEEIVETSGAPKEAVMNYYSNDESRRGLVSQMAEEKVVAFLTGKAKIEMVDKEALENAKMTEE.

The region spanning Gly163–Pro248 is the PPIase FKBP-type domain.

It belongs to the FKBP-type PPIase family. Tig subfamily.

It localises to the cytoplasm. The enzyme catalyses [protein]-peptidylproline (omega=180) = [protein]-peptidylproline (omega=0). Involved in protein export. Acts as a chaperone by maintaining the newly synthesized protein in an open conformation. Functions as a peptidyl-prolyl cis-trans isomerase. The sequence is that of Trigger factor from Syntrophotalea carbinolica (strain DSM 2380 / NBRC 103641 / GraBd1) (Pelobacter carbinolicus).